The primary structure comprises 76 residues: Protein CASC2, isoforms 1/2 (76 aa).

Residues 1–20 form a disordered region; it reads MAGTRGLMLLGPGPVAGPRD.

The protein is Protein CASC2, isoforms 1/2 (CASC2) of Homo sapiens (Human).